A 324-amino-acid polypeptide reads, in one-letter code: Germination protease (324 aa).

Residues 1–10 (MIIVLGIRTD) constitute a propeptide that is removed on maturation.

It belongs to the peptidase A25 family. As to quaternary structure, homotetramer. Post-translationally, autoproteolytically processed. The inactive tetrameric zymogen termed p46 autoprocesses to a smaller form termed p41, which is active only during spore germination.

The enzyme catalyses Endopeptidase action with P4 Glu or Asp, P1 preferably Glu &gt; Asp, P1' hydrophobic and P2' Ala.. In terms of biological role, initiates the rapid degradation of small, acid-soluble proteins during spore germination. This chain is Germination protease, found in Caldanaerobacter subterraneus subsp. tengcongensis (strain DSM 15242 / JCM 11007 / NBRC 100824 / MB4) (Thermoanaerobacter tengcongensis).